Reading from the N-terminus, the 419-residue chain is UDP-N-acetylglucosamine 1-carboxyvinyltransferase (419 aa).

Phosphoenolpyruvate is bound at residue 22–23; that stretch reads KN. Position 95 (arginine 95) interacts with UDP-N-acetyl-alpha-D-glucosamine. The active-site Proton donor is cysteine 119. Position 119 is a 2-(S-cysteinyl)pyruvic acid O-phosphothioketal (cysteine 119). Residues 164 to 167, aspartate 308, and isoleucine 330 each bind UDP-N-acetyl-alpha-D-glucosamine; that span reads KVSV.

It belongs to the EPSP synthase family. MurA subfamily.

It is found in the cytoplasm. It carries out the reaction phosphoenolpyruvate + UDP-N-acetyl-alpha-D-glucosamine = UDP-N-acetyl-3-O-(1-carboxyvinyl)-alpha-D-glucosamine + phosphate. The protein operates within cell wall biogenesis; peptidoglycan biosynthesis. Cell wall formation. Adds enolpyruvyl to UDP-N-acetylglucosamine. In Rickettsia akari (strain Hartford), this protein is UDP-N-acetylglucosamine 1-carboxyvinyltransferase.